The following is a 136-amino-acid chain: Large ribosomal subunit protein eL27B (136 aa).

Belongs to the eukaryotic ribosomal protein eL27 family. In terms of assembly, component of the large ribosomal subunit (LSU). Mature yeast ribosomes consist of a small (40S) and a large (60S) subunit. The 40S small subunit contains 1 molecule of ribosomal RNA (18S rRNA) and at least 33 different proteins. The large 60S subunit contains 3 rRNA molecules (25S, 5.8S and 5S rRNA) and at least 46 different proteins.

It localises to the cytoplasm. In terms of biological role, component of the ribosome, a large ribonucleoprotein complex responsible for the synthesis of proteins in the cell. The small ribosomal subunit (SSU) binds messenger RNAs (mRNAs) and translates the encoded message by selecting cognate aminoacyl-transfer RNA (tRNA) molecules. The large subunit (LSU) contains the ribosomal catalytic site termed the peptidyl transferase center (PTC), which catalyzes the formation of peptide bonds, thereby polymerizing the amino acids delivered by tRNAs into a polypeptide chain. The nascent polypeptides leave the ribosome through a tunnel in the LSU and interact with protein factors that function in enzymatic processing, targeting, and the membrane insertion of nascent chains at the exit of the ribosomal tunnel. The polypeptide is Large ribosomal subunit protein eL27B (rpl2702) (Schizosaccharomyces pombe (strain 972 / ATCC 24843) (Fission yeast)).